The primary structure comprises 472 residues: MKLLNKIKNENAIEFQVLIEKSEWEKKHNEAFEKVAKKTASKLKIPGFRPGNVPVEEAKKHVNEIEVFETTTNDLVPQALTFLEQDESFTSDNSETVDTPSIDILDFKDGELTLKIAYDLYPVATIDSYNDLVLTPIVNEAFDHEVNAEIEHALSSKSQRRVKDENELIEKGDEVRFDFKGMIDNVPFQGGSAKDHLLTIGSNQFIPGFEDQMIGLKVGEQKNLEVKFPDDYHATDLAGRSAVFEVLIKEITSVKPQELNDEFAKSFNLPNVNTVQELKDYIHNQIVLAKQERNSERAWLEIAQQLLAKAKVTPIPQSLIDREVSTLKQQVISQLSQYKIDLKQYLEFSKKSESQFQEDLVKQAKETIALALLVDDIAENQKIVVSDDEVKERIAEMAKLYQGEEEAIIERLSQNPDAVKEFLLHKKVVNYLIDLNKNNQPKDTASTLSKQEDKPKVAKAKTSNTKKVASKK.

Positions 172-257 (GDEVRFDFKG…IKEITSVKPQ (86 aa)) constitute a PPIase FKBP-type domain. 2 stretches are compositionally biased toward polar residues: residues 439-449 (NQPKDTASTLS) and 461-472 (KTSNTKKVASKK). The tract at residues 439–472 (NQPKDTASTLSKQEDKPKVAKAKTSNTKKVASKK) is disordered.

The protein belongs to the FKBP-type PPIase family. Tig subfamily.

The protein localises to the cytoplasm. The enzyme catalyses [protein]-peptidylproline (omega=180) = [protein]-peptidylproline (omega=0). Its function is as follows. Involved in protein export. Acts as a chaperone by maintaining the newly synthesized protein in an open conformation. Functions as a peptidyl-prolyl cis-trans isomerase. The protein is Trigger factor of Ureaplasma urealyticum serovar 10 (strain ATCC 33699 / Western).